Consider the following 202-residue polypeptide: LexA repressor (202 aa).

Residues Arg28–Lys48 constitute a DNA-binding region (H-T-H motif). Catalysis depends on for autocatalytic cleavage activity residues Ser123 and Lys160.

This sequence belongs to the peptidase S24 family. As to quaternary structure, homodimer.

The catalysed reaction is Hydrolysis of Ala-|-Gly bond in repressor LexA.. In terms of biological role, represses a number of genes involved in the response to DNA damage (SOS response), including recA and lexA. In the presence of single-stranded DNA, RecA interacts with LexA causing an autocatalytic cleavage which disrupts the DNA-binding part of LexA, leading to derepression of the SOS regulon and eventually DNA repair. The chain is LexA repressor from Pseudomonas putida (Arthrobacter siderocapsulatus).